A 270-amino-acid chain; its full sequence is Putative hydro-lyase Noca_0093 (270 aa).

This sequence belongs to the D-glutamate cyclase family.

The chain is Putative hydro-lyase Noca_0093 from Nocardioides sp. (strain ATCC BAA-499 / JS614).